The following is a 291-amino-acid chain: m-AAA protease-interacting protein 1, mitochondrial (291 aa).

A mitochondrion-targeting transit peptide spans 1–96 (MALAARLLPL…SLPASPIRSY (96 aa)).

Interacts with AFG3L2. Interacts with SPG7. Interacts with SMDT1/EMRE (via the N-terminal transit peptide); interaction is direct and takes place before maturation of SMDT1/EMRE.

It is found in the mitochondrion matrix. Its function is as follows. Promotes sorting of SMDT1/EMRE in mitochondria by ensuring its maturation. Interacts with the transit peptide region of SMDT1/EMRE precursor protein in the mitochondrial matrix, leading to protect it against protein degradation by YME1L1, thereby ensuring SMDT1/EMRE maturation by the mitochondrial processing peptidase (PMPCA and PMPCB). The sequence is that of m-AAA protease-interacting protein 1, mitochondrial from Rattus norvegicus (Rat).